A 739-amino-acid chain; its full sequence is Copalyl diphosphate synthase 1 (739 aa).

Position 154 (K154) interacts with substrate. Mg(2+)-binding residues include D287 and D289. The short motif at 287-290 (DADD) is the DXDD motif element. K373 is a substrate binding site.

The protein belongs to the terpene synthase family. The cofactor is Mg(2+).

It catalyses the reaction (2E,6E,10E)-geranylgeranyl diphosphate = (+)-copalyl diphosphate. The protein operates within secondary metabolite biosynthesis; terpenoid biosynthesis. Functionally, monofunctional diterpene synthase converting geranylgeranyl diphosphate to copalyl diphosphate. This is Copalyl diphosphate synthase 1 (CPS1) from Selaginella moellendorffii (Spikemoss).